The sequence spans 198 residues: Holliday junction branch migration complex subunit RuvA (198 aa).

The segment at 1-64 (MYEYIKGKYI…EDFIGLYGFD (64 aa)) is domain I. Positions 65-143 (SKEELEMFKL…PDELVDSSLE (79 aa)) are domain II. A flexible linker region spans residues 144-149 (IDTKDN). A domain III region spans residues 150–198 (ENVMALSEALSALIALGYSEKEAESVLKKIDKNDSVENIIKNALKALMG).

The protein belongs to the RuvA family. Homotetramer. Forms an RuvA(8)-RuvB(12)-Holliday junction (HJ) complex. HJ DNA is sandwiched between 2 RuvA tetramers; dsDNA enters through RuvA and exits via RuvB. An RuvB hexamer assembles on each DNA strand where it exits the tetramer. Each RuvB hexamer is contacted by two RuvA subunits (via domain III) on 2 adjacent RuvB subunits; this complex drives branch migration. In the full resolvosome a probable DNA-RuvA(4)-RuvB(12)-RuvC(2) complex forms which resolves the HJ.

It is found in the cytoplasm. The RuvA-RuvB-RuvC complex processes Holliday junction (HJ) DNA during genetic recombination and DNA repair, while the RuvA-RuvB complex plays an important role in the rescue of blocked DNA replication forks via replication fork reversal (RFR). RuvA specifically binds to HJ cruciform DNA, conferring on it an open structure. The RuvB hexamer acts as an ATP-dependent pump, pulling dsDNA into and through the RuvAB complex. HJ branch migration allows RuvC to scan DNA until it finds its consensus sequence, where it cleaves and resolves the cruciform DNA. This is Holliday junction branch migration complex subunit RuvA from Clostridium beijerinckii (strain ATCC 51743 / NCIMB 8052) (Clostridium acetobutylicum).